The sequence spans 283 residues: Bifunctional protein FolD (283 aa).

Residues 165–167 and S190 contribute to the NADP(+) site; that span reads GRS.

The protein belongs to the tetrahydrofolate dehydrogenase/cyclohydrolase family. As to quaternary structure, homodimer.

It carries out the reaction (6R)-5,10-methylene-5,6,7,8-tetrahydrofolate + NADP(+) = (6R)-5,10-methenyltetrahydrofolate + NADPH. The enzyme catalyses (6R)-5,10-methenyltetrahydrofolate + H2O = (6R)-10-formyltetrahydrofolate + H(+). Its pathway is one-carbon metabolism; tetrahydrofolate interconversion. Its function is as follows. Catalyzes the oxidation of 5,10-methylenetetrahydrofolate to 5,10-methenyltetrahydrofolate and then the hydrolysis of 5,10-methenyltetrahydrofolate to 10-formyltetrahydrofolate. The protein is Bifunctional protein FolD of Methylibium petroleiphilum (strain ATCC BAA-1232 / LMG 22953 / PM1).